The chain runs to 406 residues: Cysteine desulfurase IscS (406 aa).

Pyridoxal 5'-phosphate contacts are provided by residues 75–76 (AT), asparagine 155, glutamine 183, and 203–205 (SSH). Residue lysine 206 is modified to N6-(pyridoxal phosphate)lysine. Residue threonine 243 coordinates pyridoxal 5'-phosphate. Cysteine 330 serves as the catalytic Cysteine persulfide intermediate. Residue cysteine 330 participates in [2Fe-2S] cluster binding.

It belongs to the class-V pyridoxal-phosphate-dependent aminotransferase family. NifS/IscS subfamily. Homodimer. Forms a heterotetramer with IscU, interacts with other sulfur acceptors. It depends on pyridoxal 5'-phosphate as a cofactor.

The protein resides in the cytoplasm. It catalyses the reaction (sulfur carrier)-H + L-cysteine = (sulfur carrier)-SH + L-alanine. It functions in the pathway cofactor biosynthesis; iron-sulfur cluster biosynthesis. Its function is as follows. Master enzyme that delivers sulfur to a number of partners involved in Fe-S cluster assembly, tRNA modification or cofactor biosynthesis. Catalyzes the removal of elemental sulfur atoms from cysteine to produce alanine. Functions as a sulfur delivery protein for Fe-S cluster synthesis onto IscU, an Fe-S scaffold assembly protein, as well as other S acceptor proteins. The polypeptide is Cysteine desulfurase IscS (Glaesserella parasuis serovar 5 (strain SH0165) (Haemophilus parasuis)).